The chain runs to 441 residues: Histidinol dehydrogenase homolog (441 aa).

H266 contributes to the Zn(2+) binding site. Catalysis depends on proton acceptor residues E334 and H335. H427 provides a ligand contact to Zn(2+).

This sequence belongs to the histidinol dehydrogenase family. The cofactor is Zn(2+).

This is Histidinol dehydrogenase homolog from Cereibacter sphaeroides (strain ATCC 17023 / DSM 158 / JCM 6121 / CCUG 31486 / LMG 2827 / NBRC 12203 / NCIMB 8253 / ATH 2.4.1.) (Rhodobacter sphaeroides).